Consider the following 501-residue polypeptide: Glycerol kinase (501 aa).

T17 is a binding site for ADP. ATP-binding residues include T17, T18, and S19. Position 17 (T17) interacts with sn-glycerol 3-phosphate. Residue R21 participates in ADP binding. Sn-glycerol 3-phosphate contacts are provided by R87, E88, Y139, and D243. Residues R87, E88, Y139, D243, and Q244 each contribute to the glycerol site. ADP-binding residues include T265 and G308. Residues T265, G308, Q312, and G409 each coordinate ATP. ADP-binding residues include G409 and N413.

Belongs to the FGGY kinase family.

The catalysed reaction is glycerol + ATP = sn-glycerol 3-phosphate + ADP + H(+). It functions in the pathway polyol metabolism; glycerol degradation via glycerol kinase pathway; sn-glycerol 3-phosphate from glycerol: step 1/1. Its activity is regulated as follows. Inhibited by fructose 1,6-bisphosphate (FBP). Its function is as follows. Key enzyme in the regulation of glycerol uptake and metabolism. Catalyzes the phosphorylation of glycerol to yield sn-glycerol 3-phosphate. In Pseudomonas syringae pv. syringae (strain B728a), this protein is Glycerol kinase.